A 240-amino-acid polypeptide reads, in one-letter code: Phosphoribosylaminoimidazole-succinocarboxamide synthase (240 aa).

Belongs to the SAICAR synthetase family.

The catalysed reaction is 5-amino-1-(5-phospho-D-ribosyl)imidazole-4-carboxylate + L-aspartate + ATP = (2S)-2-[5-amino-1-(5-phospho-beta-D-ribosyl)imidazole-4-carboxamido]succinate + ADP + phosphate + 2 H(+). Its pathway is purine metabolism; IMP biosynthesis via de novo pathway; 5-amino-1-(5-phospho-D-ribosyl)imidazole-4-carboxamide from 5-amino-1-(5-phospho-D-ribosyl)imidazole-4-carboxylate: step 1/2. This is Phosphoribosylaminoimidazole-succinocarboxamide synthase from Acidithiobacillus ferrooxidans (strain ATCC 23270 / DSM 14882 / CIP 104768 / NCIMB 8455) (Ferrobacillus ferrooxidans (strain ATCC 23270)).